The following is a 511-amino-acid chain: Trigger factor (511 aa).

One can recognise a PPIase FKBP-type domain in the interval 168–253 (GDLLTIDFVG…VKEVKAPAEV (86 aa)). The segment at 446–511 (DEHEHHHHDH…KAPAKKKKED (66 aa)) is disordered. A compositionally biased stretch (basic and acidic residues) spans 455-478 (HDHDHDHDHDHDHGHDHDHGDEKP). A compositionally biased stretch (basic residues) spans 479 to 488 (KKKPAAKKAA). Residues 489-498 (AKSDDGEAKP) are compositionally biased toward basic and acidic residues. A compositionally biased stretch (basic residues) spans 499–511 (AAKKAPAKKKKED).

Belongs to the FKBP-type PPIase family. Tig subfamily.

Its subcellular location is the cytoplasm. The catalysed reaction is [protein]-peptidylproline (omega=180) = [protein]-peptidylproline (omega=0). Its function is as follows. Involved in protein export. Acts as a chaperone by maintaining the newly synthesized protein in an open conformation. Functions as a peptidyl-prolyl cis-trans isomerase. In Parvibaculum lavamentivorans (strain DS-1 / DSM 13023 / NCIMB 13966), this protein is Trigger factor.